The sequence spans 399 residues: S-adenosylmethionine synthase (399 aa).

Position 17 (His17) interacts with ATP. Asp19 contributes to the Mg(2+) binding site. Residue Glu52 coordinates K(+). Residues Glu65 and Gln109 each contribute to the L-methionine site. Residues 109-119 are flexible loop; the sequence is QSADIAQGVDA. ATP is bound by residues 177 to 179, 243 to 244, Asp252, 258 to 259, Ala275, and Lys279; these read DSK, KF, and RK. Asp252 lines the L-methionine pocket. Lys283 contacts L-methionine.

Belongs to the AdoMet synthase family. As to quaternary structure, homotetramer; dimer of dimers. The cofactor is Mg(2+). Requires K(+) as cofactor.

It is found in the cytoplasm. The enzyme catalyses L-methionine + ATP + H2O = S-adenosyl-L-methionine + phosphate + diphosphate. It participates in amino-acid biosynthesis; S-adenosyl-L-methionine biosynthesis; S-adenosyl-L-methionine from L-methionine: step 1/1. Catalyzes the formation of S-adenosylmethionine (AdoMet) from methionine and ATP. The overall synthetic reaction is composed of two sequential steps, AdoMet formation and the subsequent tripolyphosphate hydrolysis which occurs prior to release of AdoMet from the enzyme. This chain is S-adenosylmethionine synthase, found in Bradyrhizobium sp. (strain ORS 278).